The primary structure comprises 219 residues: MPALDLIRPSVTAMRVIASVNADFARELKLPPHIRSLGLISADSDDVTYIAADEATKQAMVEVVYGRSLYAGAAHGPSPTAGEVLIMLGGPNPAEVRAGLDAMIAHIENGAAFQWANDAQDTAFLAHVVSRTGSYLSSTAGITLGDPMAYLVAPPLEATYGIDAALKSADVQLATYVPPPSETNYSAAFLTGSQAACKAACNAFTDAVLEIARNPIQRA.

BMC circularly permuted domains are found at residues 1 to 113 (MPAL…GAAF) and 114 to 215 (QWAN…ARNP). Ethanolamine is bound by residues aspartate 45, aspartate 46, glutamate 83, and phenylalanine 113. The tract at residues 45–46 (DD) is part of the acidic patch lining the small pore. A Zn(2+)-binding site is contributed by glutamate 157. 183-185 (TNY) contacts ethanolamine.

This sequence belongs to the EutL/PduB family. As to quaternary structure, homotrimerizes to form a pseudohexamer. The trimers form a two-dimensional array about 37 Angstroms thick.

It localises to the bacterial microcompartment. It functions in the pathway amine and polyamine degradation; ethanolamine degradation. Functionally, a component of the bacterial microcompartment (BMC) shell dedicated to ethanolamine degradation. Two crystal forms have been seen; a form with a closed central pore that has 3 very small (1.1-2.2 Angstroms) channels per trimer lined by acidic and aromatic residues. A form with a large central pore (8-12 Angstroms) has also been seen; this is probably a functional pore which allows molecules to enter and exit the BMC in a selective, gated manner. Another group only sees the central pore in the presence of Zn(2+); soaking crystals in ZnCl(2) leads to dramatic conformational changes that open a central pore of about 12 Angstroms. Whether Zn(2+) binding is physiologically relevant is unclear, however it suggests a gating mechanism exists. Ethanolamine-binding by the small channels has been hypothesized to stabilize the EutL central pore in a closed (non-transporting) state. An open pore is thought to be large enough to transport ATP and/or cobalamin. The protein is Bacterial microcompartment shell protein EutL (eutL) of Escherichia coli (strain K12).